The chain runs to 1102 residues: Carbamoyl phosphate synthase large chain (1102 aa).

Positions 1–408 (MPKRTDIQSV…ALQKALRSLE (408 aa)) are carboxyphosphate synthetic domain. The ATP site is built by Arg-129, Arg-175, Gly-181, Gly-182, Glu-214, Ile-216, Glu-221, Gly-247, Val-248, His-249, Gln-291, and Glu-305. One can recognise an ATP-grasp 1 domain in the interval 138–334 (AVRAKIGHGE…IAKIAAKLAV (197 aa)). Gln-291, Glu-305, and Asn-307 together coordinate Mg(2+). Gln-291, Glu-305, and Asn-307 together coordinate Mn(2+). The segment at 409 to 551 (KKGSQFTFVG…YFYSSYDEES (143 aa)) is oligomerization domain. The segment at 552-954 (EVAPREKPAV…AYAKSQAGAY (403 aa)) is carbamoyl phosphate synthetic domain. An ATP-grasp 2 domain is found at 682–873 (GQVLAEAGLP…LAKAAARISL (192 aa)). The ATP site is built by Arg-718, Arg-757, Leu-759, Glu-764, Gly-789, Ile-790, His-791, Ser-792, Gln-832, and Glu-844. Gln-832, Glu-844, and Asn-846 together coordinate Mg(2+). Residues Gln-832, Glu-844, and Asn-846 each coordinate Mn(2+). Positions 955–1100 (GPLPTKGRAF…QEHAEHLTAA (146 aa)) constitute an MGS-like domain. The segment at 955–1102 (GPLPTKGRAF…HAEHLTAARD (148 aa)) is allosteric domain.

This sequence belongs to the CarB family. As to quaternary structure, composed of two chains; the small (or glutamine) chain promotes the hydrolysis of glutamine to ammonia, which is used by the large (or ammonia) chain to synthesize carbamoyl phosphate. Tetramer of heterodimers (alpha,beta)4. It depends on Mg(2+) as a cofactor. The cofactor is Mn(2+).

The enzyme catalyses hydrogencarbonate + L-glutamine + 2 ATP + H2O = carbamoyl phosphate + L-glutamate + 2 ADP + phosphate + 2 H(+). The catalysed reaction is hydrogencarbonate + NH4(+) + 2 ATP = carbamoyl phosphate + 2 ADP + phosphate + 2 H(+). It participates in amino-acid biosynthesis; L-arginine biosynthesis; carbamoyl phosphate from bicarbonate: step 1/1. It functions in the pathway pyrimidine metabolism; UMP biosynthesis via de novo pathway; (S)-dihydroorotate from bicarbonate: step 1/3. Functionally, large subunit of the glutamine-dependent carbamoyl phosphate synthetase (CPSase). CPSase catalyzes the formation of carbamoyl phosphate from the ammonia moiety of glutamine, carbonate, and phosphate donated by ATP, constituting the first step of 2 biosynthetic pathways, one leading to arginine and/or urea and the other to pyrimidine nucleotides. The large subunit (synthetase) binds the substrates ammonia (free or transferred from glutamine from the small subunit), hydrogencarbonate and ATP and carries out an ATP-coupled ligase reaction, activating hydrogencarbonate by forming carboxy phosphate which reacts with ammonia to form carbamoyl phosphate. The sequence is that of Carbamoyl phosphate synthase large chain from Streptomyces avermitilis (strain ATCC 31267 / DSM 46492 / JCM 5070 / NBRC 14893 / NCIMB 12804 / NRRL 8165 / MA-4680).